Reading from the N-terminus, the 251-residue chain is uncharacterized protein (251 aa).

14 to 37 (VLGGTSAIGLATARRLIARGARLV) lines the NADP(+) pocket. Substrate is bound at residue Ser-145. Tyr-158 functions as the Proton acceptor in the catalytic mechanism.

The protein belongs to the short-chain dehydrogenases/reductases (SDR) family.

May be involved in the biosynthesis of a heptaene-type antibiotic. This is an uncharacterized protein from Streptomyces coelicolor.